Consider the following 749-residue polypeptide: Chaperone protein dnaK3 (749 aa).

Residue T198 is modified to Phosphothreonine; by autocatalysis. Basic and acidic residues-rich tracts occupy residues 643–653 (RWDADPWDRSR), 661–694 (YDDR…RDRN), and 711–724 (PTWE…RDRS). A disordered region spans residues 643 to 749 (RWDADPWDRS…GWDDDDDEWF (107 aa)). Residues 740–749 (GWDDDDDEWF) show a composition bias toward acidic residues.

Belongs to the heat shock protein 70 family.

In terms of biological role, acts as a chaperone. In Synechococcus elongatus (strain ATCC 33912 / PCC 7942 / FACHB-805) (Anacystis nidulans R2), this protein is Chaperone protein dnaK3 (dnaK3).